A 227-amino-acid polypeptide reads, in one-letter code: Cytochrome c oxidase subunit 2 (227 aa).

Topologically, residues 1 to 14 are mitochondrial intermembrane; the sequence is MAHRAQVGLQDATS. A helical membrane pass occupies residues 15-45; the sequence is PIMEELVIFHDHALMIIFLICFLVLYALFLT. Over 46–59 the chain is Mitochondrial matrix; it reads LTTKLTNTNISDAQ. The chain crosses the membrane as a helical span at residues 60 to 87; that stretch reads EMETIWTTLPAIILILIALPSLRILYLT. The Mitochondrial intermembrane portion of the chain corresponds to 88 to 227; it reads DEINDPSFTI…IFEMGPVFAL (140 aa). Cu cation contacts are provided by His161, Cys196, Glu198, Cys200, His204, and Met207. Position 198 (Glu198) interacts with Mg(2+).

The protein belongs to the cytochrome c oxidase subunit 2 family. In terms of assembly, component of the cytochrome c oxidase (complex IV, CIV), a multisubunit enzyme composed of 14 subunits. The complex is composed of a catalytic core of 3 subunits MT-CO1, MT-CO2 and MT-CO3, encoded in the mitochondrial DNA, and 11 supernumerary subunits COX4I, COX5A, COX5B, COX6A, COX6B, COX6C, COX7A, COX7B, COX7C, COX8 and NDUFA4, which are encoded in the nuclear genome. The complex exists as a monomer or a dimer and forms supercomplexes (SCs) in the inner mitochondrial membrane with NADH-ubiquinone oxidoreductase (complex I, CI) and ubiquinol-cytochrome c oxidoreductase (cytochrome b-c1 complex, complex III, CIII), resulting in different assemblies (supercomplex SCI(1)III(2)IV(1) and megacomplex MCI(2)III(2)IV(2)). Found in a complex with TMEM177, COA6, COX18, COX20, SCO1 and SCO2. Interacts with TMEM177 in a COX20-dependent manner. Interacts with COX20. Interacts with COX16. Requires Cu cation as cofactor.

The protein resides in the mitochondrion inner membrane. The enzyme catalyses 4 Fe(II)-[cytochrome c] + O2 + 8 H(+)(in) = 4 Fe(III)-[cytochrome c] + 2 H2O + 4 H(+)(out). Its function is as follows. Component of the cytochrome c oxidase, the last enzyme in the mitochondrial electron transport chain which drives oxidative phosphorylation. The respiratory chain contains 3 multisubunit complexes succinate dehydrogenase (complex II, CII), ubiquinol-cytochrome c oxidoreductase (cytochrome b-c1 complex, complex III, CIII) and cytochrome c oxidase (complex IV, CIV), that cooperate to transfer electrons derived from NADH and succinate to molecular oxygen, creating an electrochemical gradient over the inner membrane that drives transmembrane transport and the ATP synthase. Cytochrome c oxidase is the component of the respiratory chain that catalyzes the reduction of oxygen to water. Electrons originating from reduced cytochrome c in the intermembrane space (IMS) are transferred via the dinuclear copper A center (CU(A)) of subunit 2 and heme A of subunit 1 to the active site in subunit 1, a binuclear center (BNC) formed by heme A3 and copper B (CU(B)). The BNC reduces molecular oxygen to 2 water molecules using 4 electrons from cytochrome c in the IMS and 4 protons from the mitochondrial matrix. The chain is Cytochrome c oxidase subunit 2 (MT-CO2) from Pongo pygmaeus (Bornean orangutan).